We begin with the raw amino-acid sequence, 392 residues long: Phosphoglycerate kinase (392 aa).

Residues 21–23, R36, 59–62, R118, and R151 contribute to the substrate site; these read DFN and HLGR. Residues K201, G292, E323, and 349–352 each bind ATP; that span reads GGDS.

Belongs to the phosphoglycerate kinase family. Monomer.

It localises to the cytoplasm. It catalyses the reaction (2R)-3-phosphoglycerate + ATP = (2R)-3-phospho-glyceroyl phosphate + ADP. It functions in the pathway carbohydrate degradation; glycolysis; pyruvate from D-glyceraldehyde 3-phosphate: step 2/5. The chain is Phosphoglycerate kinase from Borrelia turicatae (strain 91E135).